The sequence spans 1442 residues: Trafficking protein particle complex subunit 10 (1442 aa).

Residues 1–23 are compositionally biased toward polar residues; it reads MSNVSPNSMNLNGSTSSTASVND. Disordered stretches follow at residues 1 to 86, 251 to 277, 535 to 564, 1208 to 1238, 1316 to 1335, and 1422 to 1442; these read MSNV…SSSS, TSSG…TSTK, GSSS…NSGI, LSSS…NHSK, QQQQ…QKQQ, and LQDN…TNKT. A compositionally biased stretch (low complexity) spans 39–86; that stretch reads SSSSASSISNSNSSSSNNLKPSTQPLSSSSTLNTPTQFSLQHSSSSSS. Residues 535-553 are compositionally biased toward low complexity; that stretch reads GSSSSNTPSSTSATTAANG. Over residues 554–564 the composition is skewed to polar residues; it reads KNTPMPSNSGI. Residues 1208–1236 are compositionally biased toward low complexity; that stretch reads LSSSTSPSSATDSSNSNGNNNNNNNNNNH. The span at 1425 to 1442 shows a compositional bias: low complexity; the sequence is NNNNNNNSINSQTSTNKT.

Belongs to the TMEM1 family. As to quaternary structure, part of the multisubunit TRAPP (transport protein particle) complex.

Its subcellular location is the golgi apparatus. The protein localises to the cis-Golgi network. Its function is as follows. May play a role in vesicular transport from endoplasmic reticulum to Golgi. This Dictyostelium discoideum (Social amoeba) protein is Trafficking protein particle complex subunit 10 (trapcc10-1).